The following is an 88-amino-acid chain: MIASSVKAEVVKSNARSANDTGSPEVQVALLTARINELTPHFKQHAKDHHGRRGLLRMVSRRRKLLDYLKSKDADRYTALIAKLGLRK.

Residues 1 to 23 (MIASSVKAEVVKSNARSANDTGS) form a disordered region. Residues 14–23 (NARSANDTGS) are compositionally biased toward polar residues.

Belongs to the universal ribosomal protein uS15 family. As to quaternary structure, part of the 30S ribosomal subunit. Forms a bridge to the 50S subunit in the 70S ribosome, contacting the 23S rRNA.

Functionally, one of the primary rRNA binding proteins, it binds directly to 16S rRNA where it helps nucleate assembly of the platform of the 30S subunit by binding and bridging several RNA helices of the 16S rRNA. Forms an intersubunit bridge (bridge B4) with the 23S rRNA of the 50S subunit in the ribosome. The chain is Small ribosomal subunit protein uS15 from Delftia acidovorans (strain DSM 14801 / SPH-1).